A 410-amino-acid polypeptide reads, in one-letter code: Toluene 1,2-dioxygenase system ferredoxin--NAD(+) reductase component (410 aa).

Position 4 to 35 (4 to 35 (HVAIIGNGVGGFTTAQALRAEGFEGRISLIGD)) interacts with FAD. Residue 145 to 173 (RLLIVGGGLIGCEVATTARKLGLSVTILE) coordinates NAD(+).

The protein belongs to the bacterial ring-hydroxylating dioxygenase ferredoxin reductase family. This dioxygenase system consists of four proteins: the two subunits of the hydroxylase component (todC1 and todC2), a ferredoxin (TodB) and a ferredoxin reductase (TodA). It depends on FAD as a cofactor.

It carries out the reaction 2 reduced [2Fe-2S]-[ferredoxin] + NAD(+) + H(+) = 2 oxidized [2Fe-2S]-[ferredoxin] + NADH. Its pathway is xenobiotic degradation; toluene degradation. Functionally, part of the electron transfer component of toluene 1,2-dioxygenase, transfers electrons from ferredoxin (TodB) to NADH. This is Toluene 1,2-dioxygenase system ferredoxin--NAD(+) reductase component (todA) from Pseudomonas putida (strain ATCC 700007 / DSM 6899 / JCM 31910 / BCRC 17059 / LMG 24140 / F1).